The chain runs to 362 residues: Chorismate synthase (362 aa).

An NADP(+)-binding site is contributed by Arg47. FMN contacts are provided by residues 124-126 (RSS), Gly286, 301-305 (KPTAT), and Arg327.

The protein belongs to the chorismate synthase family. As to quaternary structure, homotetramer. FMNH2 serves as cofactor.

The enzyme catalyses 5-O-(1-carboxyvinyl)-3-phosphoshikimate = chorismate + phosphate. It participates in metabolic intermediate biosynthesis; chorismate biosynthesis; chorismate from D-erythrose 4-phosphate and phosphoenolpyruvate: step 7/7. Functionally, catalyzes the anti-1,4-elimination of the C-3 phosphate and the C-6 proR hydrogen from 5-enolpyruvylshikimate-3-phosphate (EPSP) to yield chorismate, which is the branch point compound that serves as the starting substrate for the three terminal pathways of aromatic amino acid biosynthesis. This reaction introduces a second double bond into the aromatic ring system. The sequence is that of Chorismate synthase from Synechococcus elongatus (strain ATCC 33912 / PCC 7942 / FACHB-805) (Anacystis nidulans R2).